Reading from the N-terminus, the 105-residue chain is uncharacterized protein (105 aa).

This sequence belongs to the EspC family.

Functionally, may be involved in assembly of the ESX-1 / type VII specialized secretion system (T7SS), which exports several proteins including EsxA and EsxB. Involved in DNA conjugation, in at least recipient strain. This is an uncharacterized protein from Mycolicibacterium smegmatis (strain MKD8) (Mycobacterium smegmatis).